The following is a 217-amino-acid chain: Probable GTP-binding protein EngB (217 aa).

The region spanning 31 to 205 (VGVEIAFAGR…LAILDAWCHP (175 aa)) is the EngB-type G domain. GTP contacts are provided by residues 39–46 (GRSNAGKS), 66–70 (GRTQL), 84–87 (DLPG), 151–154 (TKAD), and 184–186 (FSA). Mg(2+)-binding residues include Ser46 and Thr68.

The protein belongs to the TRAFAC class TrmE-Era-EngA-EngB-Septin-like GTPase superfamily. EngB GTPase family. Mg(2+) serves as cofactor.

In terms of biological role, necessary for normal cell division and for the maintenance of normal septation. The polypeptide is Probable GTP-binding protein EngB (Shewanella amazonensis (strain ATCC BAA-1098 / SB2B)).